The chain runs to 148 residues: Transcriptional repressor NrdR (148 aa).

Residues 3-34 fold into a zinc finger; sequence CPFCHNEDTQVLDTRVSDEGDTIRRRRRCAKC. The ATP-cone domain occupies 49-139; that stretch reads PAIVKKNGSR…VYRSFADIES (91 aa).

The protein belongs to the NrdR family. The cofactor is Zn(2+).

Its function is as follows. Negatively regulates transcription of bacterial ribonucleotide reductase nrd genes and operons by binding to NrdR-boxes. This Polynucleobacter necessarius subsp. necessarius (strain STIR1) protein is Transcriptional repressor NrdR.